Here is a 244-residue protein sequence, read N- to C-terminus: 1-(5-phosphoribosyl)-5-[(5-phosphoribosylamino)methylideneamino] imidazole-4-carboxamide isomerase (244 aa).

Asp12 functions as the Proton acceptor in the catalytic mechanism. Asp131 serves as the catalytic Proton donor.

Belongs to the HisA/HisF family.

It localises to the cytoplasm. It carries out the reaction 1-(5-phospho-beta-D-ribosyl)-5-[(5-phospho-beta-D-ribosylamino)methylideneamino]imidazole-4-carboxamide = 5-[(5-phospho-1-deoxy-D-ribulos-1-ylimino)methylamino]-1-(5-phospho-beta-D-ribosyl)imidazole-4-carboxamide. It functions in the pathway amino-acid biosynthesis; L-histidine biosynthesis; L-histidine from 5-phospho-alpha-D-ribose 1-diphosphate: step 4/9. The protein is 1-(5-phosphoribosyl)-5-[(5-phosphoribosylamino)methylideneamino] imidazole-4-carboxamide isomerase of Nocardioides sp. (strain ATCC BAA-499 / JS614).